The primary structure comprises 371 residues: Lysine racemase (371 aa).

K39 (proton acceptor) is an active-site residue. K39 is subject to N6-(pyridoxal phosphate)lysine. R135 lines the substrate pocket. Y266 (proton acceptor) is an active-site residue. Residue M313 coordinates substrate.

This sequence belongs to the alanine racemase family. Homodimer. The cofactor is pyridoxal 5'-phosphate.

It catalyses the reaction L-lysine = D-lysine. Functionally, catalyzes the interconversion of D-lysine and L-lysine. Can also use arginine and ornithine, but not alanine. The sequence is that of Lysine racemase from Oenococcus oeni (strain ATCC BAA-331 / PSU-1).